Here is a 620-residue protein sequence, read N- to C-terminus: FAD-linked oxidoreductase notD (620 aa).

An N-terminal signal peptide occupies residues Met-1–Ala-21. Residues Asn-50, Asn-86, and Asn-109 are each glycosylated (N-linked (GlcNAc...) asparagine). The region spanning Ser-124–Ala-313 is the FAD-binding PCMH-type domain. Residue Asn-403 is glycosylated (N-linked (GlcNAc...) asparagine).

It belongs to the oxygen-dependent FAD-linked oxidoreductase family. It depends on FAD as a cofactor.

It participates in alkaloid biosynthesis. Its function is as follows. FAD-linked oxidoreductase; part of the gene cluster that mediates the biosynthesis of notoamide, a fungal indole alkaloid that belongs to a family of natural products containing a characteristic bicyclo[2.2.2]diazaoctane core. The first step of notoamide biosynthesis involves coupling of L-proline and L-tryptophan by the bimodular NRPS notE, to produce cyclo-L-tryptophan-L-proline called brevianamide F. The reverse prenyltransferase notF then acts as a deoxybrevianamide E synthase and converts brevianamide F to deoxybrevianamide E via reverse prenylation at C-2 of the indole ring leading to the bicyclo[2.2.2]diazaoctane core. Deoxybrevianamide E is further hydroxylated at C-6 of the indole ring, likely catalyzed by the cytochrome P450 monooxygenase notG, to yield 6-hydroxy-deoxybrevianamide E. 6-hydroxy-deoxybrevianamide E is a specific substrate of the prenyltransferase notC for normal prenylation at C-7 to produce 6-hydroxy-7-prenyl-deoxybrevianamide, also called notoamide S. As the proposed pivotal branching point in notoamide biosynthesis, notoamide S can be diverted to notoamide E through an oxidative pyran ring closure putatively catalyzed by either notH cytochrome P450 monooxygenase or the notD FAD-linked oxidoreductase. This step would be followed by an indole 2,3-epoxidation-initiated pinacol-like rearrangement catalyzed by the notB FAD-dependent monooxygenase leading to the formation of notoamide C and notoamide D. On the other hand notoamide S is converted to notoamide T by notH (or notD), a bifunctional oxidase that also functions as the intramolecular Diels-Alderase responsible for generation of (+)-notoamide T. To generate antipodal (-)-notoaminide T, notH' (or notD') in Aspergillus versicolor is expected to catalyze a Diels-Alder reaction leading to the opposite stereochemistry. The remaining oxidoreductase notD (or notH) likely catalyzes the oxidative pyran ring formation to yield (+)-stephacidin A. The FAD-dependent monooxygenase notI is highly similar to notB and is predicted to catalyze a similar conversion from (+)-stephacidin A to (-)-notoamide B via the 2,3-epoxidation of (+)-stephacidin A followed by a pinacol-type rearrangement. Finally, it remains unclear which enzyme could be responsible for the final hydroxylation steps leading to notoamide A and sclerotiamide. The polypeptide is FAD-linked oxidoreductase notD (Aspergillus sp. (strain MF297-2)).